A 104-amino-acid chain; its full sequence is Matrix Gla protein (104 aa).

The signal sequence occupies residues 1 to 19; it reads MKSLLPLAILAALAVATLC. At Glu-21 the chain carries 4-carboxyglutamate. A phosphoserine mark is found at Ser-22, Ser-25, and Ser-28. Residues 51–97 form the Gla domain; sequence RAKAQKRVQERNKPAYEINREACDDYKLCERYAMVYGYNAAYNRYFR. Residues Glu-60, Glu-67, and Glu-71 each carry the 4-carboxyglutamate modification. A disulfide bridge links Cys-73 with Cys-79.

Belongs to the osteocalcin/matrix Gla protein family. Requires vitamin K-dependent gamma-carboxylation for its function.

Its subcellular location is the secreted. Its function is as follows. Associates with the organic matrix of bone and cartilage. Thought to act as an inhibitor of bone formation. This is Matrix Gla protein (Mgp) from Mus musculus (Mouse).